The sequence spans 430 residues: Protein translocase subunit SecY (430 aa).

10 consecutive transmembrane segments (helical) span residues 18–38, 68–88, 117–137, 147–167, 174–194, 217–237, 270–290, 308–328, 368–388, and 389–409; these read IFFT…PAPG, FSIF…MQLL, FAII…NNYL, VMSY…LIWL, FGVG…TLPS, ILGL…VLEA, VIPV…TLFF, NIGM…YAFV, FVGS…TKFM, and GLPQ…GVAI.

This sequence belongs to the SecY/SEC61-alpha family. In terms of assembly, component of the Sec protein translocase complex. Heterotrimer consisting of SecY, SecE and SecG subunits. The heterotrimers can form oligomers, although 1 heterotrimer is thought to be able to translocate proteins. Interacts with the ribosome. Interacts with SecDF, and other proteins may be involved. Interacts with SecA.

The protein localises to the cell membrane. Its function is as follows. The central subunit of the protein translocation channel SecYEG. Consists of two halves formed by TMs 1-5 and 6-10. These two domains form a lateral gate at the front which open onto the bilayer between TMs 2 and 7, and are clamped together by SecE at the back. The channel is closed by both a pore ring composed of hydrophobic SecY resides and a short helix (helix 2A) on the extracellular side of the membrane which forms a plug. The plug probably moves laterally to allow the channel to open. The ring and the pore may move independently. The chain is Protein translocase subunit SecY from Staphylococcus epidermidis (strain ATCC 35984 / DSM 28319 / BCRC 17069 / CCUG 31568 / BM 3577 / RP62A).